The sequence spans 190 residues: Elongation factor P (190 aa).

The protein belongs to the elongation factor P family.

It localises to the cytoplasm. Its pathway is protein biosynthesis; polypeptide chain elongation. Its function is as follows. Involved in peptide bond synthesis. Stimulates efficient translation and peptide-bond synthesis on native or reconstituted 70S ribosomes in vitro. Probably functions indirectly by altering the affinity of the ribosome for aminoacyl-tRNA, thus increasing their reactivity as acceptors for peptidyl transferase. The protein is Elongation factor P of Persephonella marina (strain DSM 14350 / EX-H1).